The sequence spans 170 residues: ATP synthase subunit b (170 aa).

Residues 20–42 (QLLAMLVLLALLKKFALGPLLNI) traverse the membrane as a helical segment.

The protein belongs to the ATPase B chain family. As to quaternary structure, F-type ATPases have 2 components, F(1) - the catalytic core - and F(0) - the membrane proton channel. F(1) has five subunits: alpha(3), beta(3), gamma(1), delta(1), epsilon(1). F(0) has three main subunits: a(1), b(2) and c(10-14). The alpha and beta chains form an alternating ring which encloses part of the gamma chain. F(1) is attached to F(0) by a central stalk formed by the gamma and epsilon chains, while a peripheral stalk is formed by the delta and b chains.

Its subcellular location is the cell membrane. Its function is as follows. F(1)F(0) ATP synthase produces ATP from ADP in the presence of a proton or sodium gradient. F-type ATPases consist of two structural domains, F(1) containing the extramembraneous catalytic core and F(0) containing the membrane proton channel, linked together by a central stalk and a peripheral stalk. During catalysis, ATP synthesis in the catalytic domain of F(1) is coupled via a rotary mechanism of the central stalk subunits to proton translocation. Component of the F(0) channel, it forms part of the peripheral stalk, linking F(1) to F(0). This is ATP synthase subunit b from Bacillus velezensis (strain DSM 23117 / BGSC 10A6 / LMG 26770 / FZB42) (Bacillus amyloliquefaciens subsp. plantarum).